An 81-amino-acid chain; its full sequence is Photosystem I iron-sulfur center (81 aa).

2 4Fe-4S ferredoxin-type domains span residues 2-31 (SHIV…MVPW) and 39-68 (MASA…VRVY). [4Fe-4S] cluster is bound by residues Cys11, Cys14, Cys17, Cys21, Cys48, Cys51, Cys54, and Cys58.

In terms of assembly, the eukaryotic PSI reaction center is composed of at least 11 subunits. The cofactor is [4Fe-4S] cluster.

Its subcellular location is the plastid. The protein resides in the chloroplast thylakoid membrane. It carries out the reaction reduced [plastocyanin] + hnu + oxidized [2Fe-2S]-[ferredoxin] = oxidized [plastocyanin] + reduced [2Fe-2S]-[ferredoxin]. In terms of biological role, apoprotein for the two 4Fe-4S centers FA and FB of photosystem I (PSI); essential for photochemical activity. FB is the terminal electron acceptor of PSI, donating electrons to ferredoxin. The C-terminus interacts with PsaA/B/D and helps assemble the protein into the PSI complex. Required for binding of PsaD and PsaE to PSI. PSI is a plastocyanin/cytochrome c6-ferredoxin oxidoreductase, converting photonic excitation into a charge separation, which transfers an electron from the donor P700 chlorophyll pair to the spectroscopically characterized acceptors A0, A1, FX, FA and FB in turn. The protein is Photosystem I iron-sulfur center of Stigeoclonium helveticum (Green alga).